A 139-amino-acid chain; its full sequence is Ribonuclease P protein component (139 aa).

This sequence belongs to the RnpA family. Consists of a catalytic RNA component (M1 or rnpB) and a protein subunit.

It catalyses the reaction Endonucleolytic cleavage of RNA, removing 5'-extranucleotides from tRNA precursor.. RNaseP catalyzes the removal of the 5'-leader sequence from pre-tRNA to produce the mature 5'-terminus. It can also cleave other RNA substrates such as 4.5S RNA. The protein component plays an auxiliary but essential role in vivo by binding to the 5'-leader sequence and broadening the substrate specificity of the ribozyme. The polypeptide is Ribonuclease P protein component (Chlamydia felis (strain Fe/C-56) (Chlamydophila felis)).